The sequence spans 119 residues: Protein TusC (119 aa).

It belongs to the DsrF/TusC family. In terms of assembly, heterohexamer, formed by a dimer of trimers. The hexameric TusBCD complex contains 2 copies each of TusB, TusC and TusD. The TusBCD complex interacts with TusE.

It is found in the cytoplasm. Its function is as follows. Part of a sulfur-relay system required for 2-thiolation of 5-methylaminomethyl-2-thiouridine (mnm(5)s(2)U) at tRNA wobble positions. The chain is Protein TusC from Shigella flexneri serotype 5b (strain 8401).